Consider the following 448-residue polypeptide: Probable glycine dehydrogenase (decarboxylating) subunit 1 (448 aa).

It belongs to the GcvP family. N-terminal subunit subfamily. In terms of assembly, the glycine cleavage system is composed of four proteins: P, T, L and H. In this organism, the P 'protein' is a heterodimer of two subunits.

The enzyme catalyses N(6)-[(R)-lipoyl]-L-lysyl-[glycine-cleavage complex H protein] + glycine + H(+) = N(6)-[(R)-S(8)-aminomethyldihydrolipoyl]-L-lysyl-[glycine-cleavage complex H protein] + CO2. The glycine cleavage system catalyzes the degradation of glycine. The P protein binds the alpha-amino group of glycine through its pyridoxal phosphate cofactor; CO(2) is released and the remaining methylamine moiety is then transferred to the lipoamide cofactor of the H protein. The chain is Probable glycine dehydrogenase (decarboxylating) subunit 1 from Listeria innocua serovar 6a (strain ATCC BAA-680 / CLIP 11262).